The sequence spans 399 residues: UDP-N-acetylglucosamine--N-acetylmuramyl-(pentapeptide) pyrophosphoryl-undecaprenol N-acetylglucosamine transferase (399 aa).

A disordered region spans residues 1 to 31 (MTSRFGHSQHPRRGRSARARAGRREGVQSNF). Residues 7–21 (HSQHPRRGRSARARA) are compositionally biased toward basic residues. Residues 58–60 (TGG), Asn170, Arg206, Ser234, Ile288, and Gln333 each bind UDP-N-acetyl-alpha-D-glucosamine.

It belongs to the glycosyltransferase 28 family. MurG subfamily.

It is found in the cell inner membrane. It catalyses the reaction di-trans,octa-cis-undecaprenyl diphospho-N-acetyl-alpha-D-muramoyl-L-alanyl-D-glutamyl-meso-2,6-diaminopimeloyl-D-alanyl-D-alanine + UDP-N-acetyl-alpha-D-glucosamine = di-trans,octa-cis-undecaprenyl diphospho-[N-acetyl-alpha-D-glucosaminyl-(1-&gt;4)]-N-acetyl-alpha-D-muramoyl-L-alanyl-D-glutamyl-meso-2,6-diaminopimeloyl-D-alanyl-D-alanine + UDP + H(+). It functions in the pathway cell wall biogenesis; peptidoglycan biosynthesis. Cell wall formation. Catalyzes the transfer of a GlcNAc subunit on undecaprenyl-pyrophosphoryl-MurNAc-pentapeptide (lipid intermediate I) to form undecaprenyl-pyrophosphoryl-MurNAc-(pentapeptide)GlcNAc (lipid intermediate II). The sequence is that of UDP-N-acetylglucosamine--N-acetylmuramyl-(pentapeptide) pyrophosphoryl-undecaprenol N-acetylglucosamine transferase from Acidovorax sp. (strain JS42).